We begin with the raw amino-acid sequence, 1167 residues long: Non-toxic nonhemagglutinin (1167 aa).

The tract at residues 1–381 is light chain nLC; sequence MDIIDNVDIT…PQQIINLIDN (381 aa). Residues 382-804 are N-heavy chain nHN; it reads NNILLIKSYI…LFNSKIQLTI (423 aa). A C-heavy chain nHC region spans residues 805–1167; the sequence is KNEKPEYNLL…LNDIYSWTLI (363 aa).

The protein belongs to the botulism non-toxic nonhemagglutinin family.

Expression of the ptox operon (ntnh-orfX1-orfX2-orfX3-pmp1) in B.thuringiensis kills Anopheles but not Aedes mosquito 3rd instar larvae. The ntnh-pmp1 construct is about half as toxic. This is Non-toxic nonhemagglutinin from Paraclostridium bifermentans (Clostridium bifermentans).